The sequence spans 421 residues: O-glycoside alpha-1,2-mannosyltransferase homolog 5 (421 aa).

Glu318 (nucleophile) is an active-site residue.

It belongs to the glycosyltransferase 15 family.

It localises to the cytoplasm. Its function is as follows. Probable mannosyltransferase involved in O-glycosylation of cell wall and secreted proteins. The chain is O-glycoside alpha-1,2-mannosyltransferase homolog 5 (omh5) from Schizosaccharomyces pombe (strain 972 / ATCC 24843) (Fission yeast).